We begin with the raw amino-acid sequence, 881 residues long: Sodium/potassium/calcium exchanger Nckx30C (881 aa).

Over 1–194 (MLQPTTCSKQ…SRCRSRRCLR (194 aa)) the chain is Extracellular. The N-linked (GlcNAc...) asparagine glycan is linked to Asn-69. Disordered stretches follow at residues 79 to 111 (DMLS…APSD), 149 to 181 (AKTR…LLHP), 215 to 255 (AAKP…TSGE), and 272 to 315 (GLEE…TTKT). The span at 85–95 (RSRSSSTTIDF) shows a compositional bias: polar residues. The segment covering 149–175 (AKTRSRTAAQLPATSAASATSSRGASA) has biased composition (low complexity). The chain crosses the membrane as a helical span at residues 195 to 215 (LPIYSILLLCLTTQGLGLGDA). Residues 216-330 (AKPRPAKQHF…DLFTKEQLEN (115 aa)) lie on the Cytoplasmic side of the membrane. Low complexity predominate over residues 228-240 (SNSNSPNQNQNHN). The segment covering 296-315 (AGNQRGINDTHNDNSTTTKT) has biased composition (polar residues). The chain crosses the membrane as a helical span at residues 331 to 351 (GAVILHIIGVIYMFVALAIVC). Residues 352–375 (DEFFVPSLDVIIEKLGITDDVAGA) are Extracellular-facing. Residues 372–412 (VAGATFMAAGGSAPELFTSVIGVFVSFDDVGIGTIVGSAVF) form an Alpha-1 repeat. Residues 376 to 396 (TFMAAGGSAPELFTSVIGVFV) traverse the membrane as a helical segment. At 397–402 (SFDDVG) the chain is on the cytoplasmic side. A helical transmembrane segment spans residues 403 to 423 (IGTIVGSAVFNILFVIGMCAL). Residues 424 to 433 (FSKTVLSLTW) are Extracellular-facing. A helical transmembrane segment spans residues 434–454 (WPLFRDCSFYSISLLVLIYFF). Residues 455–458 (RDNR) lie on the Cytoplasmic side of the membrane. Residues 459 to 479 (IFWWEALILFTIYIGYVAFMK) traverse the membrane as a helical segment. At 480–720 (WNVQVETCVK…PDTRTPRGKR (241 aa)) the chain is on the extracellular side. The interval 508-565 (PAGNAANSSETSMATQPGGSVTSRAASETRSGPPGSSNAGATGNSSGGGGTSGSTQTG) is disordered. Residues 512-537 (AANSSETSMATQPGGSVTSRAASETR) show a composition bias toward polar residues. N-linked (GlcNAc...) asparagine glycosylation is found at Asn-514 and Asn-551. The span at 542-551 (GSSNAGATGN) shows a compositional bias: low complexity. Residues 721 to 741 (FFPVTFIGSIVWIAAFSYLMV) traverse the membrane as a helical segment. Over 742–756 (WWANVAGDTARIPPE) the chain is Cytoplasmic. A helical membrane pass occupies residues 757 to 777 (VMGLTFLAAGTSIPDLITSVI). One copy of the Alpha-2 repeat lies at 764–795 (AAGTSIPDLITSVIVARKGFGDMAVSSSVGSN). At 778–795 (VARKGFGDMAVSSSVGSN) the chain is on the extracellular side. A helical membrane pass occupies residues 796 to 816 (IFDVTVGLPIPWLLYGIIYGA). The Cytoplasmic portion of the chain corresponds to 817–822 (PVEVNS). A helical membrane pass occupies residues 823 to 843 (VGMVCSITILFMMLVFVVMSI). Topologically, residues 844–852 (ACFRWRMNK) are extracellular. A helical transmembrane segment spans residues 853–873 (GLGFTMFLLYFAFVAVSLMFE). Residues 874–881 (YDVITCPF) lie on the Cytoplasmic side of the membrane.

This sequence belongs to the Ca(2+):cation antiporter (CaCA) (TC 2.A.19) family. SLC24A subfamily. As to expression, expressed in the adult nervous system. Expressed in the photoreceptor cells as well as in the lamina, medulla, and optic lobes of the brain.

Its subcellular location is the membrane. Its function is as follows. May function in the removal and maintenance of calcium homeostasis during signaling in the adult and in signaling events during embryogenesis and patterning of imaginal disks. Transports one Ca(2+) and 1 K(+) in exchange for 4 Na(+). This Drosophila melanogaster (Fruit fly) protein is Sodium/potassium/calcium exchanger Nckx30C (Nckx30C).